The following is a 484-amino-acid chain: Membrane-bound lytic murein transglycosylase F (484 aa).

Residues Met-1–Ala-18 form the signal peptide. The tract at residues Ile-19–Phe-267 is non-LT domain. Positions Ser-268–Glu-484 are LT domain. The active site involves Glu-312. Positions Ala-459 to Glu-484 are disordered.

In the N-terminal section; belongs to the bacterial solute-binding protein 3 family. The protein in the C-terminal section; belongs to the transglycosylase Slt family.

The protein resides in the cell outer membrane. It carries out the reaction Exolytic cleavage of the (1-&gt;4)-beta-glycosidic linkage between N-acetylmuramic acid (MurNAc) and N-acetylglucosamine (GlcNAc) residues in peptidoglycan, from either the reducing or the non-reducing ends of the peptidoglycan chains, with concomitant formation of a 1,6-anhydrobond in the MurNAc residue.. Functionally, murein-degrading enzyme that degrades murein glycan strands and insoluble, high-molecular weight murein sacculi, with the concomitant formation of a 1,6-anhydromuramoyl product. Lytic transglycosylases (LTs) play an integral role in the metabolism of the peptidoglycan (PG) sacculus. Their lytic action creates space within the PG sacculus to allow for its expansion as well as for the insertion of various structures such as secretion systems and flagella. The sequence is that of Membrane-bound lytic murein transglycosylase F from Mannheimia succiniciproducens (strain KCTC 0769BP / MBEL55E).